The primary structure comprises 149 residues: 3-hydroxyacyl-[acyl-carrier-protein] dehydratase FabZ (149 aa).

Histidine 49 is a catalytic residue.

The protein belongs to the thioester dehydratase family. FabZ subfamily.

Its subcellular location is the cytoplasm. The enzyme catalyses a (3R)-hydroxyacyl-[ACP] = a (2E)-enoyl-[ACP] + H2O. Functionally, involved in unsaturated fatty acids biosynthesis. Catalyzes the dehydration of short chain beta-hydroxyacyl-ACPs and long chain saturated and unsaturated beta-hydroxyacyl-ACPs. The polypeptide is 3-hydroxyacyl-[acyl-carrier-protein] dehydratase FabZ (Sulfurovum sp. (strain NBC37-1)).